We begin with the raw amino-acid sequence, 200 residues long: Holliday junction resolvase RecU (200 aa).

The interval 1–24 (MTIRYPNGKRYDQASQPHKTPIKK) is disordered. 4 residues coordinate Mg(2+): T85, D87, E100, and Q119.

It belongs to the RecU family. It depends on Mg(2+) as a cofactor.

It localises to the cytoplasm. The catalysed reaction is Endonucleolytic cleavage at a junction such as a reciprocal single-stranded crossover between two homologous DNA duplexes (Holliday junction).. In terms of biological role, endonuclease that resolves Holliday junction intermediates in genetic recombination. Cleaves mobile four-strand junctions by introducing symmetrical nicks in paired strands. Promotes annealing of linear ssDNA with homologous dsDNA. Required for DNA repair, homologous recombination and chromosome segregation. This is Holliday junction resolvase RecU from Bacillus mycoides (strain KBAB4) (Bacillus weihenstephanensis).